The primary structure comprises 457 residues: tRNA modification GTPase MnmE (457 aa).

(6S)-5-formyl-5,6,7,8-tetrahydrofolate is bound by residues Arg-22, Glu-86, and Arg-125. The 161-residue stretch at 221-381 (GLRAVLAGRP…LEAEVARVAG (161 aa)) folds into the TrmE-type G domain. Asn-231 serves as a coordination point for K(+). Residues 231 to 236 (NVGKSS), 250 to 256 (TPIPGTT), and 275 to 278 (DTAG) contribute to the GTP site. Ser-235 is a binding site for Mg(2+). Positions 250, 252, and 255 each coordinate K(+). Position 256 (Thr-256) interacts with Mg(2+). Position 457 (Lys-457) interacts with (6S)-5-formyl-5,6,7,8-tetrahydrofolate.

It belongs to the TRAFAC class TrmE-Era-EngA-EngB-Septin-like GTPase superfamily. TrmE GTPase family. Homodimer. Heterotetramer of two MnmE and two MnmG subunits. It depends on K(+) as a cofactor.

The protein resides in the cytoplasm. Its function is as follows. Exhibits a very high intrinsic GTPase hydrolysis rate. Involved in the addition of a carboxymethylaminomethyl (cmnm) group at the wobble position (U34) of certain tRNAs, forming tRNA-cmnm(5)s(2)U34. In Symbiobacterium thermophilum (strain DSM 24528 / JCM 14929 / IAM 14863 / T), this protein is tRNA modification GTPase MnmE.